A 348-amino-acid chain; its full sequence is Protein RecA (348 aa).

Position 71–78 (71–78) interacts with ATP; sequence GVESSGKT.

Belongs to the RecA family.

The protein resides in the cytoplasm. In terms of biological role, can catalyze the hydrolysis of ATP in the presence of single-stranded DNA, the ATP-dependent uptake of single-stranded DNA by duplex DNA, and the ATP-dependent hybridization of homologous single-stranded DNAs. It interacts with LexA causing its activation and leading to its autocatalytic cleavage. The chain is Protein RecA from Aquifex pyrophilus.